Consider the following 261-residue polypeptide: Cytochrome c oxidase subunit 3 (261 aa).

Over 1-15 the chain is Mitochondrial matrix; that stretch reads MTHQTHAYHMVNPSP. A helical membrane pass occupies residues 16-34; the sequence is WPLTGALSALLMTSGLIMW. The Mitochondrial intermembrane portion of the chain corresponds to 35 to 40; it reads FHFNST. A helical transmembrane segment spans residues 41–66; sequence TLLMLGLTTNMLTMYQWWRDIIREST. At 67 to 72 the chain is on the mitochondrial matrix side; sequence FQGHHT. The helical transmembrane segment at 73 to 105 threads the bilayer; that stretch reads PNVQKGLRYGMILFIISEVLFFTGFFWAFYHSS. Residues 106–128 lie on the Mitochondrial intermembrane side of the membrane; the sequence is LAPTPELGGCWPPTGIHPLNPLE. A helical membrane pass occupies residues 129 to 152; that stretch reads VPLLNTSVLLASGVSITWAHHSLM. Residues 153–155 are Mitochondrial matrix-facing; it reads EGN. The chain crosses the membrane as a helical span at residues 156 to 183; that stretch reads RNHMLQALFITIALGVYFTLLQASEYYE. Over 184–190 the chain is Mitochondrial intermembrane; that stretch reads APFTISD. A helical membrane pass occupies residues 191–223; that stretch reads GVYGSTFFVATGFHGLHVIIGSTFLIVCFFRQL. Residues 224–232 lie on the Mitochondrial matrix side of the membrane; that stretch reads KFHFTSSHH. The chain crosses the membrane as a helical span at residues 233–256; sequence FGFEAAAWYWHFVDVVWLFLYVSI. Residues 257–261 lie on the Mitochondrial intermembrane side of the membrane; sequence YWWGS.

Belongs to the cytochrome c oxidase subunit 3 family. In terms of assembly, component of the cytochrome c oxidase (complex IV, CIV), a multisubunit enzyme composed of 14 subunits. The complex is composed of a catalytic core of 3 subunits MT-CO1, MT-CO2 and MT-CO3, encoded in the mitochondrial DNA, and 11 supernumerary subunits COX4I, COX5A, COX5B, COX6A, COX6B, COX6C, COX7A, COX7B, COX7C, COX8 and NDUFA4, which are encoded in the nuclear genome. The complex exists as a monomer or a dimer and forms supercomplexes (SCs) in the inner mitochondrial membrane with NADH-ubiquinone oxidoreductase (complex I, CI) and ubiquinol-cytochrome c oxidoreductase (cytochrome b-c1 complex, complex III, CIII), resulting in different assemblies (supercomplex SCI(1)III(2)IV(1) and megacomplex MCI(2)III(2)IV(2)).

The protein resides in the mitochondrion inner membrane. The enzyme catalyses 4 Fe(II)-[cytochrome c] + O2 + 8 H(+)(in) = 4 Fe(III)-[cytochrome c] + 2 H2O + 4 H(+)(out). Functionally, component of the cytochrome c oxidase, the last enzyme in the mitochondrial electron transport chain which drives oxidative phosphorylation. The respiratory chain contains 3 multisubunit complexes succinate dehydrogenase (complex II, CII), ubiquinol-cytochrome c oxidoreductase (cytochrome b-c1 complex, complex III, CIII) and cytochrome c oxidase (complex IV, CIV), that cooperate to transfer electrons derived from NADH and succinate to molecular oxygen, creating an electrochemical gradient over the inner membrane that drives transmembrane transport and the ATP synthase. Cytochrome c oxidase is the component of the respiratory chain that catalyzes the reduction of oxygen to water. Electrons originating from reduced cytochrome c in the intermembrane space (IMS) are transferred via the dinuclear copper A center (CU(A)) of subunit 2 and heme A of subunit 1 to the active site in subunit 1, a binuclear center (BNC) formed by heme A3 and copper B (CU(B)). The BNC reduces molecular oxygen to 2 water molecules using 4 electrons from cytochrome c in the IMS and 4 protons from the mitochondrial matrix. This is Cytochrome c oxidase subunit 3 (MT-CO3) from Litocranius walleri (Gerenuk).